A 249-amino-acid chain; its full sequence is uncharacterized protein (249 aa).

The N-terminal stretch at 1 to 20 (MSNQNKVLSLGLLLLAAVAA) is a signal peptide.

The protein belongs to the IIV-6 117L family.

This is an uncharacterized protein from Acheta domesticus (House cricket).